We begin with the raw amino-acid sequence, 90 residues long: MANSKSAKKRILVAERNRVRNQAVKTRVKTMAKKVLSTIEVKDVEAAKVALSVAYKEFDKAVSKGILKKNTASRKKARLAAKVNSLVSSL.

The protein belongs to the bacterial ribosomal protein bS20 family.

Functionally, binds directly to 16S ribosomal RNA. The sequence is that of Small ribosomal subunit protein bS20 from Fusobacterium nucleatum subsp. nucleatum (strain ATCC 25586 / DSM 15643 / BCRC 10681 / CIP 101130 / JCM 8532 / KCTC 2640 / LMG 13131 / VPI 4355).